The following is a 131-amino-acid chain: uncharacterized protein (131 aa).

3 consecutive transmembrane segments (helical) span residues Arg-13–Ile-35, Leu-60–Cys-79, and Leu-100–Thr-119.

The protein localises to the membrane. This is an uncharacterized protein from Saccharomyces cerevisiae (strain ATCC 204508 / S288c) (Baker's yeast).